Consider the following 433-residue polypeptide: Protein CLP1 homolog (433 aa).

ATP contacts are provided by residues Glu22, Arg61, and 128-133 (DVGKTT).

It belongs to the Clp1 family. Clp1 subfamily.

It localises to the nucleus. Functionally, required for endonucleolytic cleavage during polyadenylation-dependent pre-mRNA 3'-end formation. This chain is Protein CLP1 homolog, found in Brugia malayi (Filarial nematode worm).